Reading from the N-terminus, the 446-residue chain is Probable glycine dehydrogenase (decarboxylating) subunit 1 (446 aa).

Belongs to the GcvP family. N-terminal subunit subfamily. As to quaternary structure, the glycine cleavage system is composed of four proteins: P, T, L and H. In this organism, the P 'protein' is a heterodimer of two subunits.

The catalysed reaction is N(6)-[(R)-lipoyl]-L-lysyl-[glycine-cleavage complex H protein] + glycine + H(+) = N(6)-[(R)-S(8)-aminomethyldihydrolipoyl]-L-lysyl-[glycine-cleavage complex H protein] + CO2. In terms of biological role, the glycine cleavage system catalyzes the degradation of glycine. The P protein binds the alpha-amino group of glycine through its pyridoxal phosphate cofactor; CO(2) is released and the remaining methylamine moiety is then transferred to the lipoamide cofactor of the H protein. The chain is Probable glycine dehydrogenase (decarboxylating) subunit 1 from Thermococcus onnurineus (strain NA1).